A 485-amino-acid chain; its full sequence is Protein nucleotidyltransferase YdiU (485 aa).

Residues G90, G92, R93, K113, D125, G126, R176, and R183 each contribute to the ATP site. D252 acts as the Proton acceptor in catalysis. Mg(2+) is bound by residues N253 and D262. Position 262 (D262) interacts with ATP.

This sequence belongs to the SELO family. Requires Mg(2+) as cofactor. Mn(2+) serves as cofactor.

It carries out the reaction L-seryl-[protein] + ATP = 3-O-(5'-adenylyl)-L-seryl-[protein] + diphosphate. The catalysed reaction is L-threonyl-[protein] + ATP = 3-O-(5'-adenylyl)-L-threonyl-[protein] + diphosphate. The enzyme catalyses L-tyrosyl-[protein] + ATP = O-(5'-adenylyl)-L-tyrosyl-[protein] + diphosphate. It catalyses the reaction L-histidyl-[protein] + UTP = N(tele)-(5'-uridylyl)-L-histidyl-[protein] + diphosphate. It carries out the reaction L-seryl-[protein] + UTP = O-(5'-uridylyl)-L-seryl-[protein] + diphosphate. The catalysed reaction is L-tyrosyl-[protein] + UTP = O-(5'-uridylyl)-L-tyrosyl-[protein] + diphosphate. Nucleotidyltransferase involved in the post-translational modification of proteins. It can catalyze the addition of adenosine monophosphate (AMP) or uridine monophosphate (UMP) to a protein, resulting in modifications known as AMPylation and UMPylation. This is Protein nucleotidyltransferase YdiU from Aliivibrio fischeri (strain MJ11) (Vibrio fischeri).